Consider the following 359-residue polypeptide: WW domain-binding protein wbp-11 (359 aa).

Disordered stretches follow at residues 1 to 38 (MPSISKTKSGERYRAPTDQARKMDRKKENKRNKKDRQQ), 235 to 264 (PSSYNSMPTRMPHHHHHHHPHASSHYNPMG), and 317 to 341 (PGDNKTIVPRQAAPVQRRPEVQKQA). Positions 8–27 (KSGERYRAPTDQARKMDRKK) are enriched in basic and acidic residues. A compositionally biased stretch (basic residues) spans 245-256 (MPHHHHHHHPHA).

Functionally, activates pre-mRNA splicing. May inhibit PP1 phosphatase activity. The protein is WW domain-binding protein wbp-11 of Caenorhabditis elegans.